The chain runs to 322 residues: Cyanophycinase (322 aa).

Residues Ser-178, Glu-196, and His-220 each act as charge relay system in the active site.

This sequence belongs to the peptidase S51 family.

The catalysed reaction is [L-4-(L-arginin-2-N-yl)aspartate](n) + H2O = [L-4-(L-arginin-2-N-yl)aspartate](n-1) + L-4-(L-arginin-2-N-yl)aspartate. Its function is as follows. Exopeptidase that catalyzes the hydrolytic cleavage of multi-L-arginyl-poly-L-aspartic acid (cyanophycin; a water-insoluble reserve polymer) into aspartate-arginine dipeptides. The protein is Cyanophycinase (cphB) of Synechococcus elongatus.